A 493-amino-acid polypeptide reads, in one-letter code: Putative trans-acting regulator SP_1800 (493 aa).

Belongs to the AtxA/AcpA family.

This Streptococcus pneumoniae serotype 4 (strain ATCC BAA-334 / TIGR4) protein is Putative trans-acting regulator SP_1800.